An 81-amino-acid chain; its full sequence is MNPLISSASVIAAGLAVGLASIGPGVGQGTAAGQAVEGIARQPEAEGKIRGTLLLSLAFMEALTIYGLVVALALLFANPFV.

The next 2 membrane-spanning stretches (helical) occupy residues 3–23 and 57–77; these read PLISSASVIAAGLAVGLASIG and LAFMEALTIYGLVVALALLFA.

This sequence belongs to the ATPase C chain family. In terms of assembly, F-type ATPases have 2 components, F(1) - the catalytic core - and F(0) - the membrane proton channel. F(1) has five subunits: alpha(3), beta(3), gamma(1), delta(1), epsilon(1). F(0) has four main subunits: a(1), b(1), b'(1) and c(10-14). The alpha and beta chains form an alternating ring which encloses part of the gamma chain. F(1) is attached to F(0) by a central stalk formed by the gamma and epsilon chains, while a peripheral stalk is formed by the delta, b and b' chains.

The protein resides in the plastid. It localises to the chloroplast thylakoid membrane. Functionally, f(1)F(0) ATP synthase produces ATP from ADP in the presence of a proton or sodium gradient. F-type ATPases consist of two structural domains, F(1) containing the extramembraneous catalytic core and F(0) containing the membrane proton channel, linked together by a central stalk and a peripheral stalk. During catalysis, ATP synthesis in the catalytic domain of F(1) is coupled via a rotary mechanism of the central stalk subunits to proton translocation. Its function is as follows. Key component of the F(0) channel; it plays a direct role in translocation across the membrane. A homomeric c-ring of between 10-14 subunits forms the central stalk rotor element with the F(1) delta and epsilon subunits. This Ceratophyllum demersum (Rigid hornwort) protein is ATP synthase subunit c, chloroplastic.